The following is a 274-amino-acid chain: Undecaprenyl-diphosphatase (274 aa).

Transmembrane regions (helical) follow at residues 6–26 (SLFIAFVLGVVEGLTEFLPVS), 45–65 (AKTFEVIIQLGSILAVVVMFW), 94–114 (GHILLAMIPAVVLGLLFHDVI), 117–137 (LFAPKNVMYALVVGGFLLLAA), 155–174 (YRQAFMIGCFQCLALWPGFS), 191–211 (YAAAEFSFILAVPMMIGASGL), 223–243 (GDLPMFAVGFATAFVVALIAI), and 253–273 (ISFVPFAIYRFIVAGVVYMVF).

Belongs to the UppP family.

Its subcellular location is the cell inner membrane. The catalysed reaction is di-trans,octa-cis-undecaprenyl diphosphate + H2O = di-trans,octa-cis-undecaprenyl phosphate + phosphate + H(+). In terms of biological role, catalyzes the dephosphorylation of undecaprenyl diphosphate (UPP). Confers resistance to bacitracin. This chain is Undecaprenyl-diphosphatase, found in Serratia proteamaculans (strain 568).